Reading from the N-terminus, the 516-residue chain is MNVFFMFSLLFLAALGSCADDRNPLGECFRETDYEEFLEIAKNGLRATSNPKHVVIVGAGMSGLSAAYVLAEAGHQVTVLEASERAGGRVRTYRNDKEGWYANLGPMRLPEKHRIVREYIRKFGLQLNEFHQENDNAWHFIKNIRKRVGEVKEDPGLLQYPVKPSEEGKSAGQLYEESLGKVAEELKRTNCSYILNKYDTYSTKEYLLKEGNLSPGAVDMIGDLLNEDSGYYVSFIESLKHDDIFGYEKRFDEIVDGMDKLPTSMYQAIKEKVRFNARVIKIQQNDREVTVTYQTSANEMSPVTADYVIVCTTSRATRRITFEPPLPPKKAHALRSVHYRSGTKIFLTCTKKFWEDDGIRGGKSTTDLPSRFIYYPNHNFTSGVGVIIAYGIGDDANFFQALDFKDCGDIVINDLSLIHQLPKKDIQTFCYPSMIQRWSLDKYAMGGITTFTPYQFQHFSEALTAPFKRIYFAGEYTAQFHGWIDSTIKSGLTAARDVNRASENPSGIHLSNDNEL.

An N-terminal signal peptide occupies residues 1–18; it reads MNVFFMFSLLFLAALGSC. An intrachain disulfide couples cysteine 28 to cysteine 191. FAD contacts are provided by residues 61–62, 81–82, arginine 89, and 105–108; these read MS, EA, and GPMR. Position 108 (arginine 108) interacts with substrate. Residue asparagine 190 is glycosylated (N-linked (GlcNAc...) asparagine). Position 241 (histidine 241) interacts with substrate. An FAD-binding site is contributed by valine 279. Cysteine 349 and cysteine 430 are joined by a disulfide. The N-linked (GlcNAc...) asparagine glycan is linked to asparagine 379. Residue tyrosine 390 participates in substrate binding. FAD contacts are provided by residues glutamate 475 and 482-487; that span reads GWIDST. 482–483 is a substrate binding site; that stretch reads GW.

Belongs to the flavin monoamine oxidase family. FIG1 subfamily. Homodimer; non-covalently linked. FAD serves as cofactor. Expressed by the venom gland.

Its subcellular location is the secreted. It catalyses the reaction an L-alpha-amino acid + O2 + H2O = a 2-oxocarboxylate + H2O2 + NH4(+). The enzyme catalyses L-leucine + O2 + H2O = 4-methyl-2-oxopentanoate + H2O2 + NH4(+). It carries out the reaction L-phenylalanine + O2 + H2O = 3-phenylpyruvate + H2O2 + NH4(+). The catalysed reaction is L-tryptophan + O2 + H2O = indole-3-pyruvate + H2O2 + NH4(+). It catalyses the reaction L-methionine + O2 + H2O = 4-methylsulfanyl-2-oxobutanoate + H2O2 + NH4(+). The enzyme catalyses L-isoleucine + O2 + H2O = (S)-3-methyl-2-oxopentanoate + H2O2 + NH4(+). It carries out the reaction L-tyrosine + O2 + H2O = 3-(4-hydroxyphenyl)pyruvate + H2O2 + NH4(+). Functionally, catalyzes an oxidative deamination of predominantly hydrophobic and aromatic L-amino acids, thus producing hydrogen peroxide that may contribute to the diverse toxic effects of this enzyme. Is highly active on L-Met=L-Leu&gt;&gt;L-Phe&gt;L-Trp&gt;L-Tyr&gt;L-Ile, and weakly or not active on L-His, L-Arg, L-Val, L-Gln, L-Thr, L-Lys, and L-Ser. Exhibits a low myotoxicity (a mild myonecrosis is observed after injection in mice quadriceps muscle). In vitro, is cytotoxic to a lot of human cell lines, including AGS (IC(50)=22.7 ug/ml), MCF-7 (IC(50)=1.4 ug/ml), HL-60, HeLa and Jurkat cells, as well as to the parasite Leishmania brasiliensis (IC(50)=2.22 ug/ml). This cytotoxicity is dependent on the production of hydrogen peroxyde, since it is inhibited by catalase, a hydrogen peroxyde scavenger. In Lachesis muta (South American bushmaster), this protein is L-amino acid oxidase Lm29.